The primary structure comprises 840 residues: Protein translocase subunit SecA (840 aa).

Residues Gln87, 105–109 (GEGKT), and Asp494 each bind ATP. Positions 791 to 840 (LRKEQEDQPMFFGPAEGAGQKPQTRKDRKVGRNDPCPCGSGKKYKKCCGK) are disordered. Cys826, Cys828, Cys837, and Cys838 together coordinate Zn(2+).

This sequence belongs to the SecA family. Monomer and homodimer. Part of the essential Sec protein translocation apparatus which comprises SecA, SecYEG and auxiliary proteins SecDF-YajC and YidC. It depends on Zn(2+) as a cofactor.

It is found in the cell inner membrane. It localises to the cytoplasm. It catalyses the reaction ATP + H2O + cellular proteinSide 1 = ADP + phosphate + cellular proteinSide 2.. Part of the Sec protein translocase complex. Interacts with the SecYEG preprotein conducting channel. Has a central role in coupling the hydrolysis of ATP to the transfer of proteins into and across the cell membrane, serving as an ATP-driven molecular motor driving the stepwise translocation of polypeptide chains across the membrane. This Syntrophobacter fumaroxidans (strain DSM 10017 / MPOB) protein is Protein translocase subunit SecA.